Here is a 1021-residue protein sequence, read N- to C-terminus: 2-oxoglutarate dehydrogenase complex component E1 (1021 aa).

Residues 1–40 (MFNLRTCASKLRPLTASQTIRSLKHNRPAAPRTFQQFRCL) constitute a mitochondrion transit peptide. The Ca(2+) site is built by histidine 142, aspartate 155, and aspartate 157. The thiamine diphosphate site is built by arginine 311, aspartate 410, asparagine 443, and isoleucine 445. Residues aspartate 410, asparagine 443, and isoleucine 445 each coordinate Mg(2+). Lysine 533 participates in a covalent cross-link: Glycyl lysine isopeptide (Lys-Gly) (interchain with G-Cter in ubiquitin). Thiamine diphosphate is bound at residue glutamine 675.

Belongs to the alpha-ketoglutarate dehydrogenase family. As to quaternary structure, homodimer. The 2-oxoglutarate dehydrogenase complex is composed of OGDH (2-oxoglutarate dehydrogenase; E1), DLST (dihydrolipoamide succinyltransferase; E2) and DLD (dihydrolipoamide dehydrogenase; E3). It contains multiple copies of the three enzymatic components (E1, E2 and E3). In the nucleus, the 2-oxoglutarate dehydrogenase complex associates with kat2a. Thiamine diphosphate is required as a cofactor. Mg(2+) serves as cofactor. Expressed in the brain.

It is found in the mitochondrion. Its subcellular location is the nucleus. It catalyses the reaction N(6)-[(R)-lipoyl]-L-lysyl-[protein] + 2-oxoglutarate + H(+) = N(6)-[(R)-S(8)-succinyldihydrolipoyl]-L-lysyl-[protein] + CO2. Its activity is regulated as follows. Calcium ions and ADP stimulate, whereas ATP and NADH reduce catalytic activity. Its function is as follows. 2-oxoglutarate dehydrogenase (E1o) component of the 2-oxoglutarate dehydrogenase complex (OGDHC). Participates in the first step, rate limiting for the overall conversion of 2-oxoglutarate to succinyl-CoA and CO(2) catalyzed by the whole OGDHC. Catalyzes the irreversible decarboxylation of 2-oxoglutarate (alpha-ketoglutarate) via the thiamine diphosphate (ThDP) cofactor and subsequent transfer of the decarboxylated acyl intermediate on an oxidized dihydrolipoyl group that is covalently amidated to the E2 enzyme (dihydrolipoyllysine-residue succinyltransferase or DLST). Plays a key role in the Krebs (citric acid) cycle, which is a common pathway for oxidation of fuel molecules, including carbohydrates, fatty acids, and amino acids. Can catalyze the decarboxylation of 2-oxoadipate in vitro, but at a much lower rate than 2-oxoglutarate. Mainly active in the mitochondrion. A fraction of the 2-oxoglutarate dehydrogenase complex also localizes in the nucleus and is required for lysine succinylation of histones: associates with KAT2A on chromatin and provides succinyl-CoA to histone succinyltransferase KAT2A. The sequence is that of 2-oxoglutarate dehydrogenase complex component E1 (ogdh) from Xenopus laevis (African clawed frog).